The following is a 212-amino-acid chain: Large ribosomal subunit protein uL3 (212 aa).

Glutamine 153 carries the post-translational modification N5-methylglutamine.

Belongs to the universal ribosomal protein uL3 family. As to quaternary structure, part of the 50S ribosomal subunit. Forms a cluster with proteins L14 and L19. Post-translationally, methylated by PrmB.

One of the primary rRNA binding proteins, it binds directly near the 3'-end of the 23S rRNA, where it nucleates assembly of the 50S subunit. This is Large ribosomal subunit protein uL3 from Shewanella denitrificans (strain OS217 / ATCC BAA-1090 / DSM 15013).